The following is a 297-amino-acid chain: N-acetylneuraminate lyase (297 aa).

Serine 47 and threonine 48 together coordinate aceneuramate. Tyrosine 137 acts as the Proton donor in catalysis. Lysine 165 serves as the catalytic Schiff-base intermediate with substrate. Residues threonine 167, glycine 189, aspartate 191, glutamate 192, and serine 208 each contribute to the aceneuramate site.

Belongs to the DapA family. NanA subfamily. Homotetramer.

Its subcellular location is the cytoplasm. The enzyme catalyses aceneuramate = aldehydo-N-acetyl-D-mannosamine + pyruvate. The protein operates within amino-sugar metabolism; N-acetylneuraminate degradation; D-fructose 6-phosphate from N-acetylneuraminate: step 1/5. Its function is as follows. Catalyzes the reversible aldol cleavage of N-acetylneuraminic acid (sialic acid; Neu5Ac) to form pyruvate and N-acetylmannosamine (ManNAc) via a Schiff base intermediate. In Salmonella choleraesuis (strain SC-B67), this protein is N-acetylneuraminate lyase.